A 61-amino-acid polypeptide reads, in one-letter code: MAHPKRKISKTRRDKRRTHYKAVASQFVECSNCSAPVLLHIVCPECGHYRGKLAIEKALAV.

Belongs to the bacterial ribosomal protein bL32 family.

The polypeptide is Large ribosomal subunit protein bL32 (Cytophaga hutchinsonii (strain ATCC 33406 / DSM 1761 / CIP 103989 / NBRC 15051 / NCIMB 9469 / D465)).